Consider the following 121-residue polypeptide: uncharacterized protein (121 aa).

Positions methionine 1 to serine 31 are cleaved as a signal peptide.

It to B.burgdorferi BB0465 N-terminal region.

This is an uncharacterized protein from Methanocaldococcus jannaschii (strain ATCC 43067 / DSM 2661 / JAL-1 / JCM 10045 / NBRC 100440) (Methanococcus jannaschii).